A 274-amino-acid polypeptide reads, in one-letter code: Large ribosomal subunit protein uL2 (274 aa).

The segment at 223-265 (VVMNPVDHPHGGGEGRTSGGRHPVSPWGMPTKGFKTRKNKRTD) is disordered. Over residues 256 to 265 (FKTRKNKRTD) the composition is skewed to basic residues.

The protein belongs to the universal ribosomal protein uL2 family. Part of the 50S ribosomal subunit. Forms a bridge to the 30S subunit in the 70S ribosome.

In terms of biological role, one of the primary rRNA binding proteins. Required for association of the 30S and 50S subunits to form the 70S ribosome, for tRNA binding and peptide bond formation. It has been suggested to have peptidyltransferase activity; this is somewhat controversial. Makes several contacts with the 16S rRNA in the 70S ribosome. In Vibrio parahaemolyticus serotype O3:K6 (strain RIMD 2210633), this protein is Large ribosomal subunit protein uL2.